The chain runs to 361 residues: N-methyltransferase benX (361 aa).

Belongs to the methyltransferase superfamily.

It functions in the pathway secondary metabolite biosynthesis. Its function is as follows. N-methyltransferase; part of the gene cluster that mediates the biosynthesis of benzomalvin A and D. The pathway begins with the loading of amino acid precursors onto the A domains of the non ribosomal peptide synthetases benY and benZ. BenY and the A1 domain of benZ are loaded with anthranilate (Anth), while the A2 domain of benZ is loaded with phenylalanine (Phe). N-methylation of Phe by the methyltransferase benX may happen before loading of Phe onto benZ, after loading of Phe, or after dipeptide formation. Condensation of Anth with the secondary amine of NmPhe or Phe is catalyzed by the C1 domain of benZ, forming a dipeptide intermediate. This is followed by in trans condensation of the Anth-NmPhe dipeptide with Anth bound to the T domain of benY by the C2 domain of benZ to form the linear tripeptide Anth-NmPhe-Anth. Cyclization and release of the tripeptide is then catalyzed by the C-terminal C domain of benY and the resulting 11-member macrocyclic intermediate is expected to spontaneously collapse to form the benzodiazepine core. Benzomalvin A is in conformational equilibrium with its atropisomer, benzomalvin D. This chain is N-methyltransferase benX, found in Aspergillus terreus.